A 328-amino-acid polypeptide reads, in one-letter code: Formimidoylglutamase (328 aa).

Residues H133, D159, H161, D163, D253, and D255 each coordinate Mn(2+).

It belongs to the arginase family. Requires Mn(2+) as cofactor.

The enzyme catalyses N-formimidoyl-L-glutamate + H2O = formamide + L-glutamate. Its pathway is amino-acid degradation; L-histidine degradation into L-glutamate; L-glutamate from N-formimidoyl-L-glutamate (hydrolase route): step 1/1. Functionally, catalyzes the conversion of N-formimidoyl-L-glutamate to L-glutamate and formamide. This Streptococcus pyogenes serotype M18 (strain MGAS8232) protein is Formimidoylglutamase.